Reading from the N-terminus, the 207-residue chain is Adenylyl-sulfate kinase (207 aa).

34–41 contributes to the ATP binding site; that stretch reads GLSGSGKS. Ser-108 functions as the Phosphoserine intermediate in the catalytic mechanism.

It belongs to the APS kinase family.

It catalyses the reaction adenosine 5'-phosphosulfate + ATP = 3'-phosphoadenylyl sulfate + ADP + H(+). The protein operates within sulfur metabolism; hydrogen sulfide biosynthesis; sulfite from sulfate: step 2/3. Functionally, catalyzes the synthesis of activated sulfate. The chain is Adenylyl-sulfate kinase from Lactiplantibacillus plantarum (strain ATCC BAA-793 / NCIMB 8826 / WCFS1) (Lactobacillus plantarum).